The primary structure comprises 405 residues: Putative arsenical pump-driving ATPase (405 aa).

8-15 (GKGGVGKT) serves as a coordination point for ATP.

This sequence belongs to the arsA ATPase family.

The enzyme catalyses arsenite(in) + ATP + H2O = arsenite(out) + ADP + phosphate + H(+). Anion-transporting ATPase. Catalyzes the extrusion of arsenite. The protein is Putative arsenical pump-driving ATPase of Chlorobaculum tepidum (strain ATCC 49652 / DSM 12025 / NBRC 103806 / TLS) (Chlorobium tepidum).